The sequence spans 95 residues: FXYD domain-containing ion transport regulator 6 (95 aa).

The first 18 residues, 1-18 (MELVLVFLCSLLAPMVLA), serve as a signal peptide directing secretion. Residues 19–35 (STAEKEKEMDPFHYDYQ) are Extracellular-facing. Residues 36 to 58 (TLRIGGLVFAVVLFSVGILLILS) form a helical membrane-spanning segment. Residues 59–95 (RRCKCSFNQKPRAPGDEEAQVENLITANATEPQKAEN) lie on the Cytoplasmic side of the membrane.

It belongs to the FXYD family. Regulatory subunit of the sodium/potassium-transporting ATPase which is composed of a catalytic alpha subunit, a non-catalytic beta subunit and an additional regulatory subunit. The regulatory subunit, a member of the FXYD protein family, modulates the enzymatic activity in a tissue- and isoform-specific way by changing affinities of the Na+/K+-ATPase toward Na(+), K(+) or ATP.

The protein resides in the cell membrane. Functionally, associates with and regulates the activity of the sodium/potassium-transporting ATPase (NKA) which catalyzes the hydrolysis of ATP coupled with the exchange of Na(+) and K(+) ions across the plasma membrane. Reduces the apparent affinity for intracellular Na(+) with no change in the apparent affinity for extracellular K(+). In addition to modulating NKA kinetics, may also function as a regulator of NKA localization to the plasma membrane. The chain is FXYD domain-containing ion transport regulator 6 (FXYD6) from Macaca fascicularis (Crab-eating macaque).